A 569-amino-acid chain; its full sequence is Urease subunit beta (569 aa).

Residues Gly131 to Phe569 enclose the Urease domain. Residues His136, His138, and Lys219 each coordinate Ni(2+). Lys219 bears the N6-carboxylysine mark. His221 contacts substrate. Ni(2+) is bound by residues His248 and His274. The Proton donor role is filled by His322. Asp362 is a Ni(2+) binding site.

It belongs to the metallo-dependent hydrolases superfamily. Urease alpha subunit family. Heterohexamer of 3 UreA (alpha) and 3 UreB (beta) subunits. Ni cation is required as a cofactor. Carboxylation allows a single lysine to coordinate two nickel ions.

It localises to the cytoplasm. The catalysed reaction is urea + 2 H2O + H(+) = hydrogencarbonate + 2 NH4(+). It functions in the pathway nitrogen metabolism; urea degradation; CO(2) and NH(3) from urea (urease route): step 1/1. The chain is Urease subunit beta from Helicobacter pylori (strain P12).